We begin with the raw amino-acid sequence, 378 residues long: Apoptosis-inducing factor 1 (378 aa).

The helical transmembrane segment at 7 to 25 (NIVVVGAGVFGVSVANHLY) threads the bilayer. FAD-binding positions include 12-16 (GAGVF), Arg-51, Lys-56, and Asp-283.

Belongs to the FAD-dependent oxidoreductase family. FAD is required as a cofactor.

The protein resides in the mitochondrion outer membrane. Its subcellular location is the nucleus. In terms of biological role, putative FAD-dependent oxidoreductase involved in the resistance to cercosporin and other singlet oxygen-generating photosensitizers. Translocates from mitochondria to the nucleus under apoptotic conditions, where it degrades DNA and induces apoptosis. The polypeptide is Apoptosis-inducing factor 1 (AIF1) (Saccharomyces cerevisiae (strain ATCC 204508 / S288c) (Baker's yeast)).